The primary structure comprises 316 residues: Pantothenate kinase (316 aa).

Residue 99–106 participates in ATP binding; the sequence is GSVAVGKS.

Belongs to the prokaryotic pantothenate kinase family.

It localises to the cytoplasm. The catalysed reaction is (R)-pantothenate + ATP = (R)-4'-phosphopantothenate + ADP + H(+). The protein operates within cofactor biosynthesis; coenzyme A biosynthesis; CoA from (R)-pantothenate: step 1/5. The chain is Pantothenate kinase (coaA) from Pasteurella multocida (strain Pm70).